A 284-amino-acid polypeptide reads, in one-letter code: Pantothenate synthetase (284 aa).

Position 30–37 (30–37 (MGNLHDGH)) interacts with ATP. The active-site Proton donor is the histidine 37. Glutamine 61 is a binding site for (R)-pantoate. Glutamine 61 is a beta-alanine binding site. 149-152 (GEKD) contributes to the ATP binding site. Glutamine 155 serves as a coordination point for (R)-pantoate. Residues isoleucine 178 and 186–189 (LSSR) each bind ATP.

This sequence belongs to the pantothenate synthetase family. As to quaternary structure, homodimer.

The protein resides in the cytoplasm. The enzyme catalyses (R)-pantoate + beta-alanine + ATP = (R)-pantothenate + AMP + diphosphate + H(+). It functions in the pathway cofactor biosynthesis; (R)-pantothenate biosynthesis; (R)-pantothenate from (R)-pantoate and beta-alanine: step 1/1. Catalyzes the condensation of pantoate with beta-alanine in an ATP-dependent reaction via a pantoyl-adenylate intermediate. This is Pantothenate synthetase from Salmonella newport (strain SL254).